Reading from the N-terminus, the 156-residue chain is Small ribosomal subunit protein uS7 (156 aa).

The protein belongs to the universal ribosomal protein uS7 family. Part of the 30S ribosomal subunit. Contacts proteins S9 and S11.

Its function is as follows. One of the primary rRNA binding proteins, it binds directly to 16S rRNA where it nucleates assembly of the head domain of the 30S subunit. Is located at the subunit interface close to the decoding center, probably blocks exit of the E-site tRNA. The protein is Small ribosomal subunit protein uS7 of Pseudomonas aeruginosa (strain LESB58).